We begin with the raw amino-acid sequence, 622 residues long: Sodium/potassium/calcium exchanger 4 (622 aa).

A signal peptide spans 1–38; that stretch reads MALRGLIRQSKVRRRREMLPQQVGFVCAVLALVCCASG. Over 39–97 the chain is Extracellular; it reads LFGSLGHKTASAGKHVLLDTWRNRKLMAPINGTPLAKNCTDPAIHEFPTDLFSNKERQH. N-linked (GlcNAc...) asparagine glycosylation is present at Asn76. Residues 98–118 traverse the membrane as a helical segment; sequence GAVLLHILGALYMFYALAIVC. Over 119–142 the chain is Cytoplasmic; that stretch reads DDFFVPSLEKICEKLHLSEDVAGA. One copy of the Alpha-1 repeat lies at 139–179; that stretch reads VAGATFMAAGSSTPELFASVIGVFITHGDVGVGTIVGSAVF. A helical membrane pass occupies residues 143–163; sequence TFMAAGSSTPELFASVIGVFI. Over 164 to 172 the chain is Extracellular; that stretch reads THGDVGVGT. The chain crosses the membrane as a helical span at residues 173–193; the sequence is IVGSAVFNILCIIGVCGLFAG. Residues 194-200 are Cytoplasmic-facing; sequence QVVRLTW. The chain crosses the membrane as a helical span at residues 201-221; the sequence is WAVCRDSVYYTLSVIVLIAFI. The Extracellular segment spans residues 222–224; the sequence is YDE. Residues 225 to 245 traverse the membrane as a helical segment; sequence EIVWWEGLVLIILYVFYILIM. The Cytoplasmic segment spans residues 246 to 457; sequence KYNMKMQTFF…RWEKFFMVTF (212 aa). A disordered region spans residues 358–408; the sequence is ANGVNSKPLQNGRHENMENGNVPVENPEDPQQGQEQQPPPQPPPPEPESVE. Over residues 394–404 the composition is skewed to pro residues; sequence QPPPQPPPPEP. The helical transmembrane segment at 458 to 478 threads the bilayer; it reads ITATLWIAVFSYLMVWLVTII. Gly479 is a topological domain (extracellular). A helical membrane pass occupies residues 480–500; that stretch reads YTLGIPDVIMGITFLAAGTSV. Residues 495–526 form an Alpha-2 repeat; sequence AAGTSVPDCMASLIVARQGLGDMAVSNTIGSN. Topologically, residues 501 to 526 are cytoplasmic; it reads PDCMASLIVARQGLGDMAVSNTIGSN. A helical transmembrane segment spans residues 527–547; that stretch reads VFDILVGLGIPWGLQTMVINY. Residues 548–557 lie on the Extracellular side of the membrane; the sequence is GSTVKINSRG. The chain crosses the membrane as a helical span at residues 558 to 578; it reads LVYSVVLLLGSVALTVLGIHL. The Cytoplasmic segment spans residues 579 to 586; it reads NKWRLDRK. The chain crosses the membrane as a helical span at residues 587 to 607; the sequence is LGIYVLVLYAVFLCFSIMIEF. Residues 608-622 lie on the Extracellular side of the membrane; sequence NVFTFVNLPMCREDD.

The protein belongs to the Ca(2+):cation antiporter (CaCA) (TC 2.A.19) family. SLC24A subfamily. Expressed in late secretory-stage and maturation-stage ameloblasts, with significantly increased expression during the late stages of amelogenesis (at protein level). Widely expressed in most regions of the brain, including hippocampus, neocortex, thalamus, striatum and olfactory bulb. Expressed in the olfactory sensory neurons.

It is found in the cell membrane. Its subcellular location is the cytoplasm. The enzyme catalyses Ca(2+)(out) + K(+)(out) + 4 Na(+)(in) = Ca(2+)(in) + K(+)(in) + 4 Na(+)(out). Its function is as follows. Calcium, potassium:sodium antiporter that transports 1 Ca(2+) and 1 K(+) in exchange for 4 Na(+). Controls the rapid response termination and proper regulation of adaptation in olfactory sensory neurons (OSNs) which subsequently influences how odor information is encoded and perceived. May play a role in calcium transport during amelogenesis. The polypeptide is Sodium/potassium/calcium exchanger 4 (Mus musculus (Mouse)).